The following is a 430-amino-acid chain: F-box/kelch-repeat protein At4g33290 (430 aa).

One can recognise an F-box domain in the interval 1–44 (MITDLPKDLIEEILSRVSMTSMRVVRLTCKSWNTLSNSESFKKM). 3 Kelch repeats span residues 161–207 (LLRF…CVQG), 312–363 (VPFI…IIEE), and 383–430 (LVRI…RPTR).

The chain is F-box/kelch-repeat protein At4g33290 from Arabidopsis thaliana (Mouse-ear cress).